We begin with the raw amino-acid sequence, 357 residues long: DNA replication and repair protein RecF (357 aa).

30–37 is an ATP binding site; sequence GANGSGKT.

Belongs to the RecF family.

It localises to the cytoplasm. Its function is as follows. The RecF protein is involved in DNA metabolism; it is required for DNA replication and normal SOS inducibility. RecF binds preferentially to single-stranded, linear DNA. It also seems to bind ATP. This chain is DNA replication and repair protein RecF, found in Salmonella agona (strain SL483).